The following is a 98-amino-acid chain: Integration host factor subunit alpha (98 aa).

This sequence belongs to the bacterial histone-like protein family. Heterodimer of an alpha and a beta chain.

Its function is as follows. This protein is one of the two subunits of integration host factor, a specific DNA-binding protein that functions in genetic recombination as well as in transcriptional and translational control. This is Integration host factor subunit alpha from Glaesserella parasuis serovar 5 (strain SH0165) (Haemophilus parasuis).